Reading from the N-terminus, the 493-residue chain is Neuronal acetylcholine receptor subunit alpha-6 (493 aa).

Positions 1–30 (MLNGWGRGDLRSGLCLWICGFLAFFKGSRG) are cleaved as a signal peptide. The Extracellular segment spans residues 31-240 (CVSEEQLFHT…TYSFYIRRLP (210 aa)). 2 N-linked (GlcNAc...) asparagine glycosylation sites follow: N54 and N171. Intrachain disulfides connect C158–C172 and C222–C223. Transmembrane regions (helical) follow at residues 241-265 (MFYT…FYLP), 272-290 (VTLC…LVIT), and 306-327 (YLLF…VLNI). The Cytoplasmic segment spans residues 328-464 (HYRTPATHTM…WKYMAMVVDR (137 aa)). A Phosphoserine modification is found at S401. Residues 465–484 (VFLWVFIIVCVFGTVGLFLQ) traverse the membrane as a helical segment.

Belongs to the ligand-gated ion channel (TC 1.A.9) family. Acetylcholine receptor (TC 1.A.9.1) subfamily. Alpha-6/CHRNA6 sub-subfamily. Neuronal AChR is composed of two different types of subunits: alpha and non-alpha (beta). CHRNA6/alpha-6 subunit can be combined to CHRNB2/beta-2 and CHRNA4/alpha-4 to give rise to functional receptors. Interacts with LYPD6. Predominantly expressed in only a few brain areas, including dopaminergic neurons, norepirephrine neurons and cells of the visual system.

The protein resides in the synaptic cell membrane. The enzyme catalyses Ca(2+)(in) = Ca(2+)(out). It carries out the reaction K(+)(in) = K(+)(out). It catalyses the reaction Na(+)(in) = Na(+)(out). Activated by a myriad of ligands such as acetylcholine, cytisine and nicotine. CHRNA6 nAChR activity is inhibited by the antagonists alpha-conotoxin MII and PIA, a small disulfide-constrained peptides from cone snails. Its function is as follows. Component of neuronal acetylcholine receptors (nAChRs) that function as pentameric, ligand-gated cation channels with high calcium permeability among other activities. nAChRs are excitatory neurotrasnmitter receptors formed by a collection of nAChR subunits known to mediate synaptic transmission in the nervous system and the neuromuscular junction. Each nAchR subunit confers differential attributes to channel properties, including activation, deactivation and desensitization kinetics, pH sensitivity, cation permeability, and binding to allosteric modulators. CHRNA6 forms pentameric channels with CHRNB2 and CHRNA4 that exhibit high sensitivity to ACh and nicotine and are predominantly expressed in only a few brain areas, including dopaminergic neurons, norepirephrine neurons and cells of the visual system. nAChrs containing CHRNA6 subunits mediate endogenous cholinergic modulation of dopamine and gamma-aminobutyric acid (GABA) release in response to nicotine at nerve terminals. The protein is Neuronal acetylcholine receptor subunit alpha-6 (Chrna6) of Rattus norvegicus (Rat).